Consider the following 33-residue polypeptide: ATP synthase 27 kDa subunit, mitochondrial (33 aa).

The protein localises to the mitochondrion. Its subcellular location is the mitochondrion inner membrane. Mitochondrial membrane ATP synthase (F(1)F(0) ATP synthase or Complex V) produces ATP from ADP in the presence of a proton gradient across the membrane which is generated by electron transport complexes of the respiratory chain. F-type ATPases consist of two structural domains, F(1) - containing the extramembraneous catalytic core and F(0) - containing the membrane proton channel, linked together by a central stalk and a peripheral stalk. During catalysis, ATP synthesis in the catalytic domain of F(1) is coupled via a rotary mechanism of the central stalk subunits to proton translocation. Part of the complex F(0) domain. In Solanum tuberosum (Potato), this protein is ATP synthase 27 kDa subunit, mitochondrial.